Reading from the N-terminus, the 270-residue chain is Lipopolysaccharide core biosynthesis glycosyltransferase LpsC (270 aa).

This sequence belongs to the glycosyltransferase 2 family. WaaE/KdtX subfamily.

It functions in the pathway bacterial outer membrane biogenesis; LPS core biosynthesis. This Rhizobium meliloti (strain 1021) (Ensifer meliloti) protein is Lipopolysaccharide core biosynthesis glycosyltransferase LpsC (lpsC).